The sequence spans 308 residues: Cobalamin biosynthesis protein CobD (308 aa).

6 consecutive transmembrane segments (helical) span residues 1 to 21, 50 to 70, 71 to 91, 151 to 171, 202 to 222, and 284 to 304; these read MEIL…GDPP, FVYG…PVYF, LLDW…AILF, IGDG…PGVM, VLNF…SFFG, and LVLI…VIYF.

The protein belongs to the CobD/CbiB family.

It localises to the cell membrane. It participates in cofactor biosynthesis; adenosylcobalamin biosynthesis. Functionally, converts cobyric acid to cobinamide by the addition of aminopropanol on the F carboxylic group. The protein is Cobalamin biosynthesis protein CobD of Dehalococcoides mccartyi (strain CBDB1).